Consider the following 171-residue polypeptide: Group 1 truncated hemoglobin LI410 (171 aa).

Residues 1 to 23 (MMRTVQLRTLRPCIRAQQQPVRA) constitute a chloroplast transit peptide. Positions 63 and 111 each coordinate heme.

Belongs to the truncated hemoglobin family. Group I subfamily. The cofactor is heme.

It localises to the plastid. It is found in the chloroplast. This is Group 1 truncated hemoglobin LI410 (LI410) from Chlamydomonas moewusii (Chlamydomonas eugametos).